The following is an 82-amino-acid chain: Escargot/snail protein homolog (82 aa).

C2H2-type zinc fingers lie at residues 1–5 (HQQFH), 18–40 (FSCK…IRTH), 44–66 (CKCP…IRTH), and 72–82 (FSCQHCQSAFV).

This sequence belongs to the snail C2H2-type zinc-finger protein family.

The protein localises to the nucleus. The chain is Escargot/snail protein homolog from Calliphora vicina (Blue blowfly).